Reading from the N-terminus, the 148-residue chain is Troponin C (148 aa).

EF-hand domains are found at residues 8 to 43 (KQFN…LALH), 44 to 79 (VSDD…KVQE), 81 to 116 (EDER…LGDD), and 117 to 148 (LNDD…LMLG). Ca(2+) contacts are provided by D130, D132, S134, T136, and E141.

The protein belongs to the troponin C family.

Its function is as follows. Troponin is the central regulatory protein of striated muscle contraction. Tn consists of three components: Tn-I which is the inhibitor of actomyosin ATPase, Tn-T which contains the binding site for tropomyosin and Tn-C. The binding of calcium to Tn-C abolishes the inhibitory action of Tn on actin filaments. The sequence is that of Troponin C from Todarodes pacificus (Japanese flying squid).